Here is a 126-residue protein sequence, read N- to C-terminus: Aspartate 1-decarboxylase (126 aa).

Serine 25 serves as the catalytic Schiff-base intermediate with substrate; via pyruvic acid. Position 25 is a pyruvic acid (Ser) (serine 25). Residue threonine 57 coordinates substrate. Catalysis depends on tyrosine 58, which acts as the Proton donor. 73 to 75 (GAA) contacts substrate.

Belongs to the PanD family. As to quaternary structure, heterooctamer of four alpha and four beta subunits. It depends on pyruvate as a cofactor. Is synthesized initially as an inactive proenzyme, which is activated by self-cleavage at a specific serine bond to produce a beta-subunit with a hydroxyl group at its C-terminus and an alpha-subunit with a pyruvoyl group at its N-terminus.

Its subcellular location is the cytoplasm. It catalyses the reaction L-aspartate + H(+) = beta-alanine + CO2. It functions in the pathway cofactor biosynthesis; (R)-pantothenate biosynthesis; beta-alanine from L-aspartate: step 1/1. Catalyzes the pyruvoyl-dependent decarboxylation of aspartate to produce beta-alanine. The chain is Aspartate 1-decarboxylase from Psychrobacter arcticus (strain DSM 17307 / VKM B-2377 / 273-4).